The primary structure comprises 191 residues: dCTP deaminase, dUMP-forming (191 aa).

Residues 101–106 (KSSLGR), Asp-119, 127–129 (TLE), Gln-148, Tyr-162, and Gln-174 contribute to the dCTP site. Catalysis depends on Glu-129, which acts as the Proton donor/acceptor.

This sequence belongs to the dCTP deaminase family. In terms of assembly, homotrimer.

It carries out the reaction dCTP + 2 H2O = dUMP + NH4(+) + diphosphate. The protein operates within pyrimidine metabolism; dUMP biosynthesis; dUMP from dCTP: step 1/1. Functionally, bifunctional enzyme that catalyzes both the deamination of dCTP to dUTP and the hydrolysis of dUTP to dUMP without releasing the toxic dUTP intermediate. This is dCTP deaminase, dUMP-forming from Streptomyces avermitilis (strain ATCC 31267 / DSM 46492 / JCM 5070 / NBRC 14893 / NCIMB 12804 / NRRL 8165 / MA-4680).